The chain runs to 291 residues: MDARAINSREKADLKYPRNTYIIGDVQGCYRELQELLELIQFDSTKDRLGFVGDLVNRGPNSLEVLRFLKSLSSPLIVLGNHDLYLLILGYGLMPEDSYEHTLHAVLQAPDKLELLEWLRHCPLIRYEKSLSAVLVHAGLPPQWNIKESILHAEEISTALKGPHYLAFLKNLFGNEPSQWKEDLEGQDRLRYICNAFTRMRFCDAKGHLDLESEGKTNQAPSRFRPWFEWRNPQEDNVDIVFGHWAALNGQSSAPHTHALDTGCAWGYKLTGINLKTKERFSVPCQSALRM.

Belongs to the Ap4A hydrolase family.

The enzyme catalyses P(1),P(4)-bis(5'-adenosyl) tetraphosphate + H2O = 2 ADP + 2 H(+). In terms of biological role, hydrolyzes diadenosine 5',5'''-P1,P4-tetraphosphate to yield ADP. This is Bis(5'-nucleosyl)-tetraphosphatase, symmetrical from Coxiella burnetii (strain CbuK_Q154) (Coxiella burnetii (strain Q154)).